The primary structure comprises 688 residues: Glycine--tRNA ligase beta subunit (688 aa).

This sequence belongs to the class-II aminoacyl-tRNA synthetase family. Tetramer of two alpha and two beta subunits.

The protein localises to the cytoplasm. The enzyme catalyses tRNA(Gly) + glycine + ATP = glycyl-tRNA(Gly) + AMP + diphosphate. The sequence is that of Glycine--tRNA ligase beta subunit from Aliivibrio fischeri (strain MJ11) (Vibrio fischeri).